The sequence spans 246 residues: Biosynthetic peptidoglycan transglycosylase (246 aa).

Residues 20-42 form a helical membrane-spanning segment; that stretch reads SLRWVLAAPLLFAAASVLQVLAL.

This sequence belongs to the glycosyltransferase 51 family.

Its subcellular location is the cell inner membrane. The catalysed reaction is [GlcNAc-(1-&gt;4)-Mur2Ac(oyl-L-Ala-gamma-D-Glu-L-Lys-D-Ala-D-Ala)](n)-di-trans,octa-cis-undecaprenyl diphosphate + beta-D-GlcNAc-(1-&gt;4)-Mur2Ac(oyl-L-Ala-gamma-D-Glu-L-Lys-D-Ala-D-Ala)-di-trans,octa-cis-undecaprenyl diphosphate = [GlcNAc-(1-&gt;4)-Mur2Ac(oyl-L-Ala-gamma-D-Glu-L-Lys-D-Ala-D-Ala)](n+1)-di-trans,octa-cis-undecaprenyl diphosphate + di-trans,octa-cis-undecaprenyl diphosphate + H(+). It functions in the pathway cell wall biogenesis; peptidoglycan biosynthesis. Functionally, peptidoglycan polymerase that catalyzes glycan chain elongation from lipid-linked precursors. The protein is Biosynthetic peptidoglycan transglycosylase of Xanthomonas campestris pv. campestris (strain 8004).